The chain runs to 102 residues: Thioredoxin (102 aa).

Residues 2 to 102 form the Thioredoxin domain; sequence LHIDELTFEN…ILIHTINKYL (101 aa). Catalysis depends on nucleophile residues cysteine 29 and cysteine 32. Cysteines 29 and 32 form a disulfide.

The protein belongs to the thioredoxin family.

It localises to the plastid. The protein resides in the chloroplast. Functionally, participates in various redox reactions through the reversible oxidation of its active center dithiol to a disulfide and catalyzes dithiol-disulfide exchange reactions. In Cyanidioschyzon merolae (strain NIES-3377 / 10D) (Unicellular red alga), this protein is Thioredoxin (trxA).